Reading from the N-terminus, the 214-residue chain is Adenylate kinase (214 aa).

Gly10–Thr15 lines the ATP pocket. The tract at residues Ser30 to Val59 is NMP. AMP is bound by residues Thr31, Arg36, Gln57 to Val59, Gly85 to Arg88, and Gln92. Residues Gly122–Asp159 form an LID region. Residues Arg123 and Thr132–Tyr133 each bind ATP. The AMP site is built by Arg156 and Arg167. Residue Lys200 coordinates ATP.

The protein belongs to the adenylate kinase family. In terms of assembly, monomer.

It localises to the cytoplasm. The enzyme catalyses AMP + ATP = 2 ADP. Its pathway is purine metabolism; AMP biosynthesis via salvage pathway; AMP from ADP: step 1/1. Catalyzes the reversible transfer of the terminal phosphate group between ATP and AMP. Plays an important role in cellular energy homeostasis and in adenine nucleotide metabolism. In Aliivibrio fischeri (strain ATCC 700601 / ES114) (Vibrio fischeri), this protein is Adenylate kinase.